A 219-amino-acid polypeptide reads, in one-letter code: dTTP/UTP pyrophosphatase (219 aa).

The active-site Proton acceptor is the aspartate 79.

This sequence belongs to the Maf family. YhdE subfamily. A divalent metal cation is required as a cofactor.

It is found in the cytoplasm. The enzyme catalyses dTTP + H2O = dTMP + diphosphate + H(+). It carries out the reaction UTP + H2O = UMP + diphosphate + H(+). Its function is as follows. Nucleoside triphosphate pyrophosphatase that hydrolyzes dTTP and UTP. May have a dual role in cell division arrest and in preventing the incorporation of modified nucleotides into cellular nucleic acids. The sequence is that of dTTP/UTP pyrophosphatase from Oleidesulfovibrio alaskensis (strain ATCC BAA-1058 / DSM 17464 / G20) (Desulfovibrio alaskensis).